A 4128-amino-acid polypeptide reads, in one-letter code: DNA-dependent protein kinase catalytic subunit (4128 aa).

An N6-acetyllysine modification is found at Lys-117. The HEAT 1 repeat unit spans residues 288–323 (DNYITLFEVLSKWCSHTNVELKKAAHSALESFLRQI). Phosphoserine occurs at positions 511, 686, 840, and 891. HEAT repeat units lie at residues 1001–1037 (QDTV…LKWS) and 1050–1086 (PVNS…YKEF). A Phosphoserine modification is found at Ser-1062. Lys-1206 carries the N6-acetyllysine modification. The tract at residues 1501–1536 (LDPSCKSLANGLLELAFGFGGLCDHLVSLLLNSAML) is interaction with C1D. The interval 1501–1536 (LDPSCKSLANGLLELAFGFGGLCDHLVSLLLNSAML) is leucine-zipper. The stretch at 1720–1753 (PMKSDEFPPDSLKYNNYVDCMKKFLDALELSQSP) is one TPR 1 repeat. Residue Lys-1967 is modified to N6-acetyllysine. The disordered stretch occupies residues 2049–2071 (YSYSSQDRKPTTGHFQRREHQDS). The residue at position 2053 (Ser-2053) is a Phosphoserine; by autocatalysis. Basic and acidic residues predominate over residues 2054-2070 (QDRKPTTGHFQRREHQD). Lys-2255 carries the N6-acetyllysine modification. The tract at residues 2432–3213 (LDIVYKMVAK…DHSMSVDEDE (782 aa)) is KIP-binding. A Phosphothreonine modification is found at Thr-2531. Thr-2605 bears the Phosphothreonine; by autocatalysis mark. The residue at position 2608 (Ser-2608) is a Phosphoserine; by autocatalysis. Residues 2614–2635 (TQTQEGPLSDQRQKPGQVRATQ) form a disordered region. Phosphothreonine; by autocatalysis is present on residues Thr-2634 and Thr-2643. Positions 2738–2766 (EKLSLLYAKRGLMEQKLEKDIKSEFKMKQ) are may split the end of the DNA molecule, with the two strands separating around the region. Residues 2907-3539 (PTKRVRGKTC…IYPFIISSES (633 aa)) form the FAT domain. 2 TPR repeats span residues 2921 to 2954 (VLRW…TQDT) and 2956 to 2983 (NALL…LEWV). Ser-3206 bears the Phosphoserine mark. An N6-acetyllysine mark is found at Lys-3241, Lys-3260, Lys-3638, and Lys-3642. Residues 3722 to 4053 (FDERVKVMLS…IRYAKRKLAG (332 aa)) enclose the PI3K/PI4K catalytic domain. Positions 3728–3734 (VMLSLRK) are G-loop. 2 positions are modified to phosphoserine: Ser-3731 and Ser-3821. Residues 3919-3927 (GIGDRHLNN) are catalytic loop. The interval 3939 to 3964 (GIDFGHAFGSATQFLPVPELMPFRLT) is activation loop. Ser-4026 bears the Phosphoserine mark. The region spanning 4096 to 4128 (SGLSEETQVKCLVDQATDPNILGRTWEGWEPWM) is the FATC domain.

The protein belongs to the PI3/PI4-kinase family. In terms of assembly, DNA-PK is a heterotrimer of PRKDC and the Ku dimer (composed of XRCC6/Ku70 and XRCC5/Ku86). Formation of this complex may be promoted by interaction with ILF3. Component of the core long-range non-homologous end joining (NHEJ) complex (also named DNA-PK complex) composed of PRKDC, LIG4, XRCC4, XRCC6/Ku70, XRCC5/Ku86 and NHEJ1/XLF. Additional component of the NHEJ complex includes PAXX. Following autophosphorylation, PRKDC dissociates from DNA. Interacts with DNA-PKcs-interacting protein (KIP) with the region upstream the kinase domain. PRKDC alone also interacts with and phosphorylates DCLRE1C, thereby activating the latent endonuclease activity of this protein. Interacts with C1D. Interacts with TTI1 and TELO2. Interacts with CIB1. Interacts with SETX. Interacts with NR4A3; the DNA-dependent protein kinase complex DNA-PK phosphorylates and activates NR4A3 and prevents NR4A3 ubiquitination and degradation. Interacts with BRAT1. Part of the HDP-RNP complex composed of at least HEXIM1, PRKDC, XRCC5, XRCC6, paraspeckle proteins (SFPQ, NONO, PSPC1, RBM14, and MATR3) and NEAT1 RNA. Interacts with KAT5. Post-translationally, autophosphorylated at two clusters, the T2609 cluster and the S2056 cluster. Autophosphorylated on Ser-2053, Thr-2605, Thr-2634 and Thr-2643. Ser-2053 and Thr-2605 are DNA damage-inducible phosphorylation sites (inducible with ionizing radiation, IR) dephosphorylated by PPP5C. Autophosphorylation induces a conformational change that leads to remodeling of the DNA-PK complex, requisite for efficient end processing and DNA repair. Autophosphorylation in trans within DNA-PK complexes loaded on DNA ends leads to the dissociation of PRKDC from DNA and the transition into the short-range NHEJ complex. Autophosphorylation of the T2609 cluster is required for hematopoietic development and protein synthesis in erythrocytes precursors. S-nitrosylated by GAPDH. In terms of processing, polyubiquitinated by RNF144A, leading to proteasomal degradation.

The protein resides in the nucleus. It localises to the nucleolus. The protein localises to the cytoplasm. Its subcellular location is the cytosol. It carries out the reaction L-seryl-[protein] + ATP = O-phospho-L-seryl-[protein] + ADP + H(+). The enzyme catalyses L-threonyl-[protein] + ATP = O-phospho-L-threonyl-[protein] + ADP + H(+). With respect to regulation, activity seems to be attenuated by autophosphorylation. Binding to the SL1 region of U3 small nucleolar RNA promotes auto-phosphorylation activity. Inhibited by wortmannin. Its function is as follows. Serine/threonine-protein kinase that acts as a molecular sensor for DNA damage. Involved in DNA non-homologous end joining (NHEJ) required for double-strand break (DSB) repair and V(D)J recombination. Must be bound to DNA to express its catalytic properties. Promotes processing of hairpin DNA structures in V(D)J recombination by activation of the hairpin endonuclease artemis (DCLRE1C). Recruited by XRCC5 and XRCC6 to DNA ends and is required to (1) protect and align broken ends of DNA, thereby preventing their degradation, (2) and sequester the DSB for repair by NHEJ. Acts as a scaffold protein to aid the localization of DNA repair proteins to the site of damage. The assembly of the DNA-PK complex at DNA ends is also required for the NHEJ ligation step. Found at the ends of chromosomes, suggesting a further role in the maintenance of telomeric stability and the prevention of chromosomal end fusion. Also involved in modulation of transcription. As part of the DNA-PK complex, involved in the early steps of ribosome assembly by promoting the processing of precursor rRNA into mature 18S rRNA in the small-subunit processome. Binding to U3 small nucleolar RNA, recruits PRKDC and XRCC5/Ku86 to the small-subunit processome. Recognizes the substrate consensus sequence [ST]-Q. Phosphorylates 'Ser-139' of histone variant H2AX, thereby regulating DNA damage response mechanism. Phosphorylates ASF1A, DCLRE1C, c-Abl/ABL1, histone H1, HSPCA, c-jun/JUN, p53/TP53, PARP1, POU2F1, DHX9, FH, SRF, NHEJ1/XLF, XRCC1, XRCC4, XRCC5, XRCC6, WRN, MYC and RFA2. Can phosphorylate C1D not only in the presence of linear DNA but also in the presence of supercoiled DNA. Ability to phosphorylate p53/TP53 in the presence of supercoiled DNA is dependent on C1D. Acts as a regulator of the phosphatidylinositol 3-kinase/protein kinase B signal transduction by mediating phosphorylation of 'Ser-473' of protein kinase B (PKB/AKT1, PKB/AKT2, PKB/AKT3), promoting their activation. Contributes to the determination of the circadian period length by antagonizing phosphorylation of CRY1 'Ser-588' and increasing CRY1 protein stability, most likely through an indirect mechanism. Plays a role in the regulation of DNA virus-mediated innate immune response by assembling into the HDP-RNP complex, a complex that serves as a platform for IRF3 phosphorylation and subsequent innate immune response activation through the cGAS-STING pathway. Also regulates the cGAS-STING pathway by catalyzing phosphorylation of CGAS, thereby impairing CGAS oligomerization and activation. Also regulates the cGAS-STING pathway by mediating phosphorylation of PARP1. This chain is DNA-dependent protein kinase catalytic subunit (Prkdc), found in Mus musculus (Mouse).